Reading from the N-terminus, the 108-residue chain is Small ribosomal subunit protein mS33 (108 aa).

The disordered stretch occupies residues 84–108 (LRARDKGAPKKKRTAPSAADAKKKK).

The protein belongs to the mitochondrion-specific ribosomal protein mS33 family. As to quaternary structure, component of the mitochondrial small ribosomal subunit (mt-SSU). Mature N.crassa 74S mitochondrial ribosomes consist of a small (37S) and a large (54S) subunit. The 37S small subunit contains a 16S ribosomal RNA (16S mt-rRNA) and 32 different proteins. The 54S large subunit contains a 23S rRNA (23S mt-rRNA) and 42 different proteins.

Its subcellular location is the mitochondrion. Its function is as follows. Component of the mitochondrial ribosome (mitoribosome), a dedicated translation machinery responsible for the synthesis of mitochondrial genome-encoded proteins, including at least some of the essential transmembrane subunits of the mitochondrial respiratory chain. The mitoribosomes are attached to the mitochondrial inner membrane and translation products are cotranslationally integrated into the membrane. This Neurospora crassa (strain ATCC 24698 / 74-OR23-1A / CBS 708.71 / DSM 1257 / FGSC 987) protein is Small ribosomal subunit protein mS33 (rsm27).